The primary structure comprises 773 residues: Leucine-rich repeat-containing protein let-4 (773 aa).

Positions 1–20 are cleaved as a signal peptide; sequence MRLLLCLLLFSTLLINSTNA. Over 21–689 the chain is Extracellular; the sequence is CPGVITQACF…RLEKSFFTTT (669 aa). LRR repeat units follow at residues 61–84, 85–107, 109–132, 133–157, 159–181, 183–206, 207–230, 231–254, 256–278, 279–302, 303–326, 328–349, 350–373, 375–397, 399–421, and 486–516; these read VGLI…FFSG, LFIR…AFAG, NPVL…ALAG, LPNL…IFPN, NKLY…TFQN, KNSI…AIRG, LKQL…NFLN, LPVL…AFLN, PSLR…QFQT, FEQL…SLSG, LKQL…AFTN, SIVV…IISG, LPNL…AFYD, ASLV…TFLA, LNLL…AFNS, and LVQI…AFQQ. Residues 690 to 710 form a helical membrane-spanning segment; it reads IIFICVGTAVIVLVVVIAGLC. The Cytoplasmic segment spans residues 711–773; sequence ISKHRQLQFE…PGSSYCNYYK (63 aa).

In terms of tissue distribution, in L1 larvae, expressed in a subset of epithelial cells including epidermal, vulval and rectal cells and the excretory duct and pore. Absent from internal epithelia such as the gut and pharyngeal tubes. Transiently expressed in the excretory canal cell at the 1.5-fold embryonic stage but no longer visible in this cell at hatching.

The protein localises to the apical cell membrane. In terms of biological role, required for apical extracellular matrix organization and epithelial junction maintenance. This chain is Leucine-rich repeat-containing protein let-4 (let-4), found in Caenorhabditis elegans.